Reading from the N-terminus, the 90-residue chain is NELL2-interacting cell ontogeny regulator 1 (90 aa).

The first 26 residues, 1–26 (MVSSGYLQAVMLLLAVQLLCFRPSDA), serve as a signal peptide directing secretion.

This sequence belongs to the NICOL family.

It is found in the secreted. In terms of biological role, mRNA-binding protein which interacts with a range of target mRNAs and may promote extracellular matrix production. The chain is NELL2-interacting cell ontogeny regulator 1 from Salmo salar (Atlantic salmon).